A 91-amino-acid chain; its full sequence is DNA-directed RNA polymerase subunit omega (91 aa).

Belongs to the RNA polymerase subunit omega family. In terms of assembly, the RNAP catalytic core consists of 2 alpha, 1 beta, 1 beta' and 1 omega subunit. When a sigma factor is associated with the core the holoenzyme is formed, which can initiate transcription.

The enzyme catalyses RNA(n) + a ribonucleoside 5'-triphosphate = RNA(n+1) + diphosphate. Functionally, promotes RNA polymerase assembly. Latches the N- and C-terminal regions of the beta' subunit thereby facilitating its interaction with the beta and alpha subunits. In Psychromonas ingrahamii (strain DSM 17664 / CCUG 51855 / 37), this protein is DNA-directed RNA polymerase subunit omega.